The primary structure comprises 165 residues: Nucleotide-binding protein P9515_05441 (165 aa).

It belongs to the YajQ family.

Its function is as follows. Nucleotide-binding protein. In Prochlorococcus marinus (strain MIT 9515), this protein is Nucleotide-binding protein P9515_05441.